The sequence spans 289 residues: Ribosomal protein L11 methyltransferase (289 aa).

The S-adenosyl-L-methionine site is built by threonine 142, glycine 163, aspartate 185, and asparagine 226.

The protein belongs to the methyltransferase superfamily. PrmA family.

The protein resides in the cytoplasm. The enzyme catalyses L-lysyl-[protein] + 3 S-adenosyl-L-methionine = N(6),N(6),N(6)-trimethyl-L-lysyl-[protein] + 3 S-adenosyl-L-homocysteine + 3 H(+). In terms of biological role, methylates ribosomal protein L11. This is Ribosomal protein L11 methyltransferase from Legionella pneumophila subsp. pneumophila (strain Philadelphia 1 / ATCC 33152 / DSM 7513).